Here is an 836-residue protein sequence, read N- to C-terminus: uncharacterized protein (836 aa).

Disordered stretches follow at residues 1-25 (MDSTKEEEDLNNNIDEISDGENEEE), 692-718 (DSRSPKTVGTHESNSYEFDGASNNNQR), and 789-836 (ESSG…GYAS). Polar residues-rich tracts occupy residues 789–799 (ESSGINVSNTR) and 825–836 (IDSSSAQNGYAS).

Its subcellular location is the nucleus. This is an uncharacterized protein from Schizosaccharomyces pombe (strain 972 / ATCC 24843) (Fission yeast).